A 331-amino-acid chain; its full sequence is Aromatic 2-oxoacid reductase (331 aa).

NAD(+) is bound by residues 154-155, aspartate 175, 205-206, asparagine 211, 232-234, and aspartate 258; these read RI, AP, and AAR. Residue arginine 234 is part of the active site. Glutamate 263 is a catalytic residue. The active-site Proton donor is histidine 295.

This sequence belongs to the D-isomer specific 2-hydroxyacid dehydrogenase family.

It carries out the reaction (R)-3-phenyllactate + NAD(+) = 3-phenylpyruvate + NADH + H(+). It catalyses the reaction (2R)-2-hydroxy-3-(4-hydroxyphenyl)propanoate + NAD(+) = 3-(4-hydroxyphenyl)pyruvate + NADH + H(+). The catalysed reaction is 3-(indol-3-yl)lactate + NAD(+) = indole-3-pyruvate + NADH + H(+). It functions in the pathway amino-acid degradation. Essential for the reductive metabolism of L-phenylalanine, L-tyrosine and L-tryptophan. Catalyzes the conversion of phenylpyruvic acid to phenyllactic acid, 4-hydroxy-phenylpyruvic acid to 4-hydroxy-phenyllactic acid, and indolepyruvic acid to indolelactic acid. In Clostridium sporogenes (strain ATCC 15579), this protein is Aromatic 2-oxoacid reductase.